A 253-amino-acid polypeptide reads, in one-letter code: Claudin domain-containing protein 1 (253 aa).

A helical transmembrane segment spans residues 5 to 25 (FATAFVIACVLSLISTIYMAA). 2 N-linked (GlcNAc...) asparagine glycosylation sites follow: Asn42 and Asn72. The next 3 helical transmembrane spans lie at 141-161 (FLLP…GLCA), 175-195 (ILHL…VAGI), and 216-236 (FCLA…FIWA).

It belongs to the PMP-22/EMP/MP20 family. As to expression, widely distributed in the adult CNS with highest expression in the corpus callosum, caudate nucleus, cerebral cortex, medulla, putamen, spinal cord, substantia nigra and subthalamic nucleus. Weak expression was detected in the adult heart.

Its subcellular location is the cell junction. It localises to the tight junction. It is found in the cell membrane. Plays a role in negatively regulating the permeability of cells to small molecules. This is Claudin domain-containing protein 1 (CLDND1) from Homo sapiens (Human).